The primary structure comprises 143 residues: Anti-sigma F factor (143 aa).

This sequence belongs to the anti-sigma-factor family.

The catalysed reaction is L-seryl-[protein] + ATP = O-phospho-L-seryl-[protein] + ADP + H(+). The enzyme catalyses L-threonyl-[protein] + ATP = O-phospho-L-threonyl-[protein] + ADP + H(+). In terms of biological role, binds to sigma F and blocks its ability to form an RNA polymerase holoenzyme (E-sigma F). Phosphorylates SpoIIAA on a serine residue. This phosphorylation may enable SpoIIAA to act as an anti-anti-sigma factor that counteracts SpoIIAB and thus releases sigma F from inhibition. The sequence is that of Anti-sigma F factor from Clostridium acetobutylicum (strain ATCC 824 / DSM 792 / JCM 1419 / IAM 19013 / LMG 5710 / NBRC 13948 / NRRL B-527 / VKM B-1787 / 2291 / W).